Reading from the N-terminus, the 295-residue chain is MLILPIVKGEYKKDYNLKHLTWFKVGGNAEIFFKPLDSEDLKSFLIQNKQKLPIKTFGAGSNIIIRDGGIEGVVIKLGQNFSNIEFIDNHLIVGSSCLNYNLAKFCQANAISGFEFLVGIPGTIGGGVAMNAGAYGSEFKDIVVQIEAIDFAGNFLTFTNEEIGFKYRSNNLPKNLIILKVIFKINKGDSENILLRMNEINNARSSTQPIKERTGGSTFANPEGCKSWELIDKAGLRGYRIGGASMSELHCNFMINNGDATAKDLEDLGNFVQQKVCEDSGVKLEWEIKRIGRHP.

The FAD-binding PCMH-type domain maps to 24 to 188 (KVGGNAEIFF…LKVIFKINKG (165 aa)). The active site involves Arg168. The active-site Proton donor is Ser217. Residue Glu287 is part of the active site.

The protein belongs to the MurB family. Requires FAD as cofactor.

It localises to the cytoplasm. The enzyme catalyses UDP-N-acetyl-alpha-D-muramate + NADP(+) = UDP-N-acetyl-3-O-(1-carboxyvinyl)-alpha-D-glucosamine + NADPH + H(+). It functions in the pathway cell wall biogenesis; peptidoglycan biosynthesis. Its function is as follows. Cell wall formation. The polypeptide is UDP-N-acetylenolpyruvoylglucosamine reductase (Rickettsia rickettsii (strain Iowa)).